The chain runs to 341 residues: Aspartate carbamoyltransferase catalytic subunit (341 aa).

Residues Arg-74 and Thr-75 each coordinate carbamoyl phosphate. An L-aspartate-binding site is contributed by Lys-102. 3 residues coordinate carbamoyl phosphate: Arg-124, His-152, and Gln-155. 2 residues coordinate L-aspartate: Arg-190 and Arg-244. Carbamoyl phosphate is bound by residues Gly-285 and Pro-286.

This sequence belongs to the aspartate/ornithine carbamoyltransferase superfamily. ATCase family. As to quaternary structure, heterododecamer (2C3:3R2) of six catalytic PyrB chains organized as two trimers (C3), and six regulatory PyrI chains organized as three dimers (R2).

The enzyme catalyses carbamoyl phosphate + L-aspartate = N-carbamoyl-L-aspartate + phosphate + H(+). It functions in the pathway pyrimidine metabolism; UMP biosynthesis via de novo pathway; (S)-dihydroorotate from bicarbonate: step 2/3. In terms of biological role, catalyzes the condensation of carbamoyl phosphate and aspartate to form carbamoyl aspartate and inorganic phosphate, the committed step in the de novo pyrimidine nucleotide biosynthesis pathway. This chain is Aspartate carbamoyltransferase catalytic subunit, found in Novosphingobium aromaticivorans (strain ATCC 700278 / DSM 12444 / CCUG 56034 / CIP 105152 / NBRC 16084 / F199).